Here is a 261-residue protein sequence, read N- to C-terminus: Carbonic anhydrase 1 (261 aa).

The residue at position 2 (Ala-2) is an N-acetylalanine. The region spanning 4–261 is the Alpha-carbonic anhydrase domain; the sequence is PDWGYDGENG…LKGRTVKASF (258 aa). Positions 22–41 are disordered; that stretch reads PIANGNNQSPIDIKTSETKR. Catalysis depends on His-65, which acts as the Proton donor/acceptor. Residues His-95, His-97, and His-120 each contribute to the Zn(2+) site. Substrate contacts are provided by residues Thr-200 and 200–201; that span reads TH.

This sequence belongs to the alpha-carbonic anhydrase family. The cofactor is Zn(2+).

Its subcellular location is the cytoplasm. It carries out the reaction hydrogencarbonate + H(+) = CO2 + H2O. The catalysed reaction is urea = cyanamide + H2O. Its activity is regulated as follows. Inhibited by acetazolamide. Catalyzes the reversible hydration of carbon dioxide. Can hydrate cyanamide to urea. In Ovis aries (Sheep), this protein is Carbonic anhydrase 1 (CA1).